Consider the following 276-residue polypeptide: MCIIFFKFDPRPVSKNAYRLILAANRDEFYNRPSKLADFWGNNSEILSGLDMEEGKAGGTWLGISTRGKLGALTNYLQPRQEPDARGRGELVSHFLTSDMDSLSYLKKVSTEGHLYNGFNIIAADLSTSKGDVVCYYGNRGEPEPIVLTPGTYGLSNALLETPWKKLCFGKQLFMEAVEQSEALPKDVLVTQLLDVLNNEEAQLPDPAIEDQGQEYVQPILNKYAAVCVRCATYGTRTNTIILVDANGHVTFTERSMLDKDTSRWETNTYEFTLQS.

The protein belongs to the Tango2 family. In terms of tissue distribution, expressed in fetal liver, lung, heart and kidney. In brain, detected in the olfactory bulb, neocortex and cerebellum. Elevated in mitral cells and minimally expressed in bulb interneurons. In the cortex, restricted to the upper portion of layer 5. In the cerebellum, excluded from Purkinje cells but expressed in granule cells.

It is found in the cytoplasm. It localises to the mitochondrion. The protein resides in the golgi apparatus. May be involved in lipid homeostasis. The sequence is that of Transport and Golgi organization 2 homolog (Tango2) from Mus musculus (Mouse).